The primary structure comprises 194 residues: Imidazoleglycerol-phosphate dehydratase (194 aa).

It belongs to the imidazoleglycerol-phosphate dehydratase family.

The protein localises to the cytoplasm. The enzyme catalyses D-erythro-1-(imidazol-4-yl)glycerol 3-phosphate = 3-(imidazol-4-yl)-2-oxopropyl phosphate + H2O. The protein operates within amino-acid biosynthesis; L-histidine biosynthesis; L-histidine from 5-phospho-alpha-D-ribose 1-diphosphate: step 6/9. This Bacillus thuringiensis (strain Al Hakam) protein is Imidazoleglycerol-phosphate dehydratase.